Consider the following 181-residue polypeptide: ECF RNA polymerase sigma factor RpoE (181 aa).

The segment at 29 to 96 is sigma-70 factor domain-2; that stretch reads LFQHFAPKVK…RRIDGLRKDR (68 aa). Positions 53-56 match the Interaction with polymerase core subunit RpoC motif; sequence ECAQ. Positions 129–178 are sigma-70 factor domain-4; sequence AIARLPEAQRALIERAFFGDLTHRELAAETGLPLGTIKSRIRLALDRLRQ. The H-T-H motif DNA-binding region spans 151-170; sequence HRELAAETGLPLGTIKSRIR.

It belongs to the sigma-70 factor family. ECF subfamily. As to quaternary structure, interacts transiently with the RNA polymerase catalytic core formed by RpoA, RpoB, RpoC and RpoZ (2 alpha, 1 beta, 1 beta' and 1 omega subunit) to form the RNA polymerase holoenzyme that can initiate transcription. Forms a 1:1 complex (via sigma-70 factor domain 4) with anti-sigma factor ChrR; this inhibits the interaction of RpoE with the RNA polymerase catalytic core.

In terms of biological role, sigma factors are initiation factors that promote the attachment of RNA polymerase to specific initiation sites and are then released. Extracytoplasmic function (ECF) sigma factors are held in an inactive form by a cognate anti-sigma factor until released. Sigma-E controls a transcriptional response to singlet oxygen, a by-product of photosynthesis; its continuous activity requires constant exposure to singlet oxygen. The regulon has about 180 genes that protect against or repair damage induced by singlet oxygen, including itself and rpoH2, a heat shock-responsive sigma factor. This is ECF RNA polymerase sigma factor RpoE (rpoE) from Cereibacter sphaeroides (strain ATCC 17023 / DSM 158 / JCM 6121 / CCUG 31486 / LMG 2827 / NBRC 12203 / NCIMB 8253 / ATH 2.4.1.) (Rhodobacter sphaeroides).